Consider the following 333-residue polypeptide: Ornithine carbamoyltransferase (333 aa).

Carbamoyl phosphate contacts are provided by residues 56–59 (STRT), glutamine 83, arginine 107, and 134–137 (HPTQ). L-ornithine contacts are provided by residues asparagine 167, aspartate 231, and 235 to 236 (SM). Carbamoyl phosphate-binding positions include 273–274 (CL) and arginine 318.

It belongs to the aspartate/ornithine carbamoyltransferase superfamily. OTCase family.

Its subcellular location is the cytoplasm. The catalysed reaction is carbamoyl phosphate + L-ornithine = L-citrulline + phosphate + H(+). It functions in the pathway amino-acid biosynthesis; L-arginine biosynthesis; L-arginine from L-ornithine and carbamoyl phosphate: step 1/3. Functionally, reversibly catalyzes the transfer of the carbamoyl group from carbamoyl phosphate (CP) to the N(epsilon) atom of ornithine (ORN) to produce L-citrulline. The chain is Ornithine carbamoyltransferase (argF) from Staphylococcus aureus (strain COL).